The chain runs to 668 residues: DNA ligase (668 aa).

NAD(+) contacts are provided by residues 34-38, 83-84, and Glu-113; these read DAEYD and SL. Catalysis depends on Lys-115, which acts as the N6-AMP-lysine intermediate. NAD(+) is bound by residues Arg-136, Glu-170, Lys-286, and Lys-310. The Zn(2+) site is built by Cys-404, Cys-407, Cys-422, and Cys-427. Residues 590 to 668 enclose the BRCT domain; sequence ESDSYFAGKT…EVKMLEELKK (79 aa).

The protein belongs to the NAD-dependent DNA ligase family. LigA subfamily. It depends on Mg(2+) as a cofactor. The cofactor is Mn(2+).

It carries out the reaction NAD(+) + (deoxyribonucleotide)n-3'-hydroxyl + 5'-phospho-(deoxyribonucleotide)m = (deoxyribonucleotide)n+m + AMP + beta-nicotinamide D-nucleotide.. Its function is as follows. DNA ligase that catalyzes the formation of phosphodiester linkages between 5'-phosphoryl and 3'-hydroxyl groups in double-stranded DNA using NAD as a coenzyme and as the energy source for the reaction. It is essential for DNA replication and repair of damaged DNA. This chain is DNA ligase, found in Bacillus pumilus (strain SAFR-032).